The sequence spans 142 residues: UPF0102 protein PsycPRwf_0497 (142 aa).

The protein belongs to the UPF0102 family.

In Psychrobacter sp. (strain PRwf-1), this protein is UPF0102 protein PsycPRwf_0497.